Reading from the N-terminus, the 75-residue chain is DNA-directed RNA polymerase subunit omega (75 aa).

Belongs to the RNA polymerase subunit omega family. In cyanobacteria the RNAP catalytic core is composed of 2 alpha, 1 beta, 1 beta', 1 gamma and 1 omega subunit. When a sigma factor is associated with the core the holoenzyme is formed, which can initiate transcription.

It carries out the reaction RNA(n) + a ribonucleoside 5'-triphosphate = RNA(n+1) + diphosphate. Functionally, promotes RNA polymerase assembly. Latches the N- and C-terminal regions of the beta' subunit thereby facilitating its interaction with the beta and alpha subunits. The polypeptide is DNA-directed RNA polymerase subunit omega (Microcystis aeruginosa (strain NIES-843 / IAM M-2473)).